Here is a 66-residue protein sequence, read N- to C-terminus: Small vasohibin-binding protein (66 aa).

Residues 1 to 23 are compositionally biased toward basic and acidic residues; the sequence is MDPPARKEKTKVKESVSRVEKAK. Residues 1-31 are disordered; it reads MDPPARKEKTKVKESVSRVEKAKQKSAQQEL. A coiled-coil region spans residues 5 to 52; that stretch reads ARKEKTKVKESVSRVEKAKQKSAQQELKQRQRAEIYALNRVMTELEQQ.

It belongs to the SVBP family. Interacts with VASH1 and VASH2.

The protein localises to the cytoplasm. Its subcellular location is the secreted. It localises to the cytoskeleton. Its function is as follows. Enhances the tyrosine carboxypeptidase activity of VASH1 and VASH2, thereby promoting the removal of the C-terminal tyrosine residue of alpha-tubulin. This activity is critical for spindle function and accurate chromosome segregation during mitosis since microtubule detyronisation regulates mitotic spindle length and postioning. Also required to enhance the solubility and secretion of VASH1 and VASH2. Plays a role in axon and excitatory synapse formation. In Homo sapiens (Human), this protein is Small vasohibin-binding protein.